The chain runs to 1218 residues: DNA-directed RNA polymerase subunit beta' (1218 aa).

Zn(2+) contacts are provided by Cys-60, Cys-62, Cys-75, and Cys-78. 3 residues coordinate Mg(2+): Asp-455, Asp-457, and Asp-459. Positions 824, 897, 904, and 907 each coordinate Zn(2+). Residues 1195 to 1218 (ENEAQSDKSQDEQEIGEITVDMGE) form a disordered region.

It belongs to the RNA polymerase beta' chain family. In terms of assembly, the RNAP catalytic core consists of 2 alpha, 1 beta, 1 beta' and 1 omega subunit. When a sigma factor is associated with the core the holoenzyme is formed, which can initiate transcription. Requires Mg(2+) as cofactor. Zn(2+) serves as cofactor.

The catalysed reaction is RNA(n) + a ribonucleoside 5'-triphosphate = RNA(n+1) + diphosphate. DNA-dependent RNA polymerase catalyzes the transcription of DNA into RNA using the four ribonucleoside triphosphates as substrates. This is DNA-directed RNA polymerase subunit beta' from Natranaerobius thermophilus (strain ATCC BAA-1301 / DSM 18059 / JW/NM-WN-LF).